Reading from the N-terminus, the 633-residue chain is Lysophospholipase 1 (633 aa).

Positions 1 to 20 are cleaved as a signal peptide; sequence MKTTTVACAVAGLLFSCVSG. The region spanning 47–594 is the PLA2c domain; sequence GCPASRPTIR…QRYCWDGSLN (548 aa). N64, N104, N139, N173, N246, N290, N329, N358, N397, N450, N463, N469, N497, N500, N521, N549, N555, and N594 each carry an N-linked (GlcNAc...) asparagine glycan. Residue S609 is the site of GPI-like-anchor amidated serine attachment. A propeptide spans 610–633 (removed in mature form); that stretch reads AASGIIPSISTVAMAVVFAAWTIF.

Belongs to the lysophospholipase family. The GPI-like anchor contains a phosphoceramide lipid group. The anchor position has not been determined.

It localises to the cell membrane. It catalyses the reaction a 1-acyl-sn-glycero-3-phosphocholine + H2O = sn-glycerol 3-phosphocholine + a fatty acid + H(+). In terms of biological role, catalyzes the release of fatty acids from lysophospholipids. The polypeptide is Lysophospholipase 1 (plb1) (Aspergillus fumigatus (strain CBS 144.89 / FGSC A1163 / CEA10) (Neosartorya fumigata)).